Consider the following 314-residue polypeptide: Glyceraldehyde-3-phosphate dehydrogenase A, chloroplastic (314 aa).

NADP(+)-binding positions include 5-6, D29, and R74; that span reads RI. A disulfide bridge links C13 with C283. D-glyceraldehyde 3-phosphate contacts are provided by residues 147–149, T178, R193, 206–207, and R229; these read SCT and TG. Residue C148 is the Nucleophile of the active site. N311 contributes to the NADP(+) binding site.

It belongs to the glyceraldehyde-3-phosphate dehydrogenase family. Homotetramer.

The protein localises to the plastid. The protein resides in the chloroplast. The enzyme catalyses D-glyceraldehyde 3-phosphate + phosphate + NADP(+) = (2R)-3-phospho-glyceroyl phosphate + NADPH + H(+). Its pathway is carbohydrate biosynthesis; Calvin cycle. This chain is Glyceraldehyde-3-phosphate dehydrogenase A, chloroplastic (GapA), found in Scenedesmus vacuolatus (Green alga).